We begin with the raw amino-acid sequence, 349 residues long: Shematrin-like protein 1 (349 aa).

An N-terminal signal peptide occupies residues 1–16 (MLKLVCAVFLIATVSA).

As to expression, prismatic layer of shell (at protein level).

Its subcellular location is the secreted. In Margaritifera margaritifera (Freshwater pearl mussel), this protein is Shematrin-like protein 1.